The following is a 672-amino-acid chain: tRNA 5-methylaminomethyl-2-thiouridine biosynthesis bifunctional protein MnmC (672 aa).

The tRNA (mnm(5)s(2)U34)-methyltransferase stretch occupies residues 1–243 (MTSIKNAELG…KREMIAGSME (243 aa)). The FAD-dependent cmnm(5)s(2)U34 oxidoreductase stretch occupies residues 269 to 672 (IGGGIASAAL…LRKGKAITEL (404 aa)).

It in the N-terminal section; belongs to the methyltransferase superfamily. tRNA (mnm(5)s(2)U34)-methyltransferase family. This sequence in the C-terminal section; belongs to the DAO family. Requires FAD as cofactor.

It localises to the cytoplasm. The catalysed reaction is 5-aminomethyl-2-thiouridine(34) in tRNA + S-adenosyl-L-methionine = 5-methylaminomethyl-2-thiouridine(34) in tRNA + S-adenosyl-L-homocysteine + H(+). Catalyzes the last two steps in the biosynthesis of 5-methylaminomethyl-2-thiouridine (mnm(5)s(2)U) at the wobble position (U34) in tRNA. Catalyzes the FAD-dependent demodification of cmnm(5)s(2)U34 to nm(5)s(2)U34, followed by the transfer of a methyl group from S-adenosyl-L-methionine to nm(5)s(2)U34, to form mnm(5)s(2)U34. The sequence is that of tRNA 5-methylaminomethyl-2-thiouridine biosynthesis bifunctional protein MnmC from Vibrio campbellii (strain ATCC BAA-1116).